The primary structure comprises 855 residues: DNA mismatch repair protein MutS (855 aa).

ATP is bound at residue 621–628 (GPNMGGKS).

Belongs to the DNA mismatch repair MutS family.

In terms of biological role, this protein is involved in the repair of mismatches in DNA. It is possible that it carries out the mismatch recognition step. This protein has a weak ATPase activity. In Francisella tularensis subsp. holarctica (strain OSU18), this protein is DNA mismatch repair protein MutS.